A 256-amino-acid chain; its full sequence is Triosephosphate isomerase (256 aa).

10-12 (NWK) is a binding site for substrate. His97 acts as the Electrophile in catalysis. Catalysis depends on Glu169, which acts as the Proton acceptor. Substrate contacts are provided by residues Gly175, Ser214, and 235–236 (GG).

It belongs to the triosephosphate isomerase family. As to quaternary structure, homodimer.

The protein resides in the cytoplasm. It catalyses the reaction D-glyceraldehyde 3-phosphate = dihydroxyacetone phosphate. Its pathway is carbohydrate biosynthesis; gluconeogenesis. It functions in the pathway carbohydrate degradation; glycolysis; D-glyceraldehyde 3-phosphate from glycerone phosphate: step 1/1. Involved in the gluconeogenesis. Catalyzes stereospecifically the conversion of dihydroxyacetone phosphate (DHAP) to D-glyceraldehyde-3-phosphate (G3P). In Haemophilus ducreyi (strain 35000HP / ATCC 700724), this protein is Triosephosphate isomerase.